The primary structure comprises 261 residues: Major biofilm matrix component (261 aa).

The signal sequence occupies residues 1–27 (MGMKKKLSLGVASAALGLALVGGGTWA). The interval 241–261 (DHTDKDGYVKENEKAHSEDKN) is disordered.

It belongs to the peptidase M73 family. Forms fibers. Fibers have variable length and are 10-15 nm width. Interacts with obg (AC P20964) in pull-down experiments.

It is found in the secreted. It localises to the forespore intermembrane space. Functionally, tasA is the major protein component of the biofilm extracellular matrix. It forms amyloid fibers that bind cells together in the biofilm. Exhibits an antibacterial activity against a variety of Gram-positive and Gram-negative bacteria. In laboratory strains, is also involved in proper spore coat assembly. This Bacillus subtilis (strain 168) protein is Major biofilm matrix component.